The following is a 129-amino-acid chain: Small ribosomal subunit protein uS11 (129 aa).

It belongs to the universal ribosomal protein uS11 family. Part of the 30S ribosomal subunit. Interacts with proteins S7 and S18. Binds to IF-3.

Its function is as follows. Located on the platform of the 30S subunit, it bridges several disparate RNA helices of the 16S rRNA. Forms part of the Shine-Dalgarno cleft in the 70S ribosome. The sequence is that of Small ribosomal subunit protein uS11 from Escherichia fergusonii (strain ATCC 35469 / DSM 13698 / CCUG 18766 / IAM 14443 / JCM 21226 / LMG 7866 / NBRC 102419 / NCTC 12128 / CDC 0568-73).